The following is a 347-amino-acid chain: NADH-ubiquinone oxidoreductase chain 2 (347 aa).

Helical transmembrane passes span 3 to 23 (PPILIIIMATIMTGTMIVMLS), 25 to 45 (HWLLIWIGFEMNMLAVIPVLM), 66 to 86 (ASMLLMMGVTINLLYSGQWVV), 96 to 116 (IMMTIALTMKLGLSPFHFWVP), 122 to 142 (ITLTSGMILLTWQKIAPMSVL), 149 to 169 (INTNLLMLVALVSVLVGGWGG), 178 to 198 (IMAYSSIAHMGWMAAIIIYNP), 201 to 221 (MILNLVLYILMTLSTFMLFML), 237 to 257 (FPLITSIILILMLSLGGLPPL), 274 to 294 (NMIIIPTLMAITALLNLYFYL), and 323 to 343 (TILLPPLIITSTMLLPLTPML).

It belongs to the complex I subunit 2 family. Core subunit of respiratory chain NADH dehydrogenase (Complex I) which is composed of 45 different subunits. Interacts with TMEM242.

The protein resides in the mitochondrion inner membrane. The enzyme catalyses a ubiquinone + NADH + 5 H(+)(in) = a ubiquinol + NAD(+) + 4 H(+)(out). Functionally, core subunit of the mitochondrial membrane respiratory chain NADH dehydrogenase (Complex I) which catalyzes electron transfer from NADH through the respiratory chain, using ubiquinone as an electron acceptor. Essential for the catalytic activity and assembly of complex I. The chain is NADH-ubiquinone oxidoreductase chain 2 from Canis rufus (Red wolf).